The primary structure comprises 627 residues: DNA topoisomerase 4 subunit B (627 aa).

ATP contacts are provided by residues Tyr4, Asn41, Asp68, 109 to 115, and Lys333; that span reads GLHGVGV. The Toprim domain maps to 412 to 525; it reads TELFIVEGDS…NGHIYIAQPP (114 aa). Glu418, Asp490, and Asp492 together coordinate Mg(2+).

It belongs to the type II topoisomerase family. ParE type 1 subfamily. As to quaternary structure, heterotetramer composed of ParC and ParE. Mg(2+) serves as cofactor. The cofactor is Mn(2+). Ca(2+) is required as a cofactor.

It catalyses the reaction ATP-dependent breakage, passage and rejoining of double-stranded DNA.. With respect to regulation, pyrrolopyrimidines inhibit both GyrB and its paralog in topoisomerase IV (parE). Its function is as follows. Topoisomerase IV is essential for chromosome segregation. It relaxes supercoiled DNA. Performs the decatenation events required during the replication of a circular DNA molecule. The protein is DNA topoisomerase 4 subunit B of Francisella tularensis subsp. holarctica (strain LVS).